The sequence spans 937 residues: AP-2 complex subunit beta (937 aa).

Threonine 2 is subject to N-acetylthreonine. Phosphoserine is present on serine 4. Lysine 265 bears the N6-acetyllysine mark. A phosphotyrosine mark is found at tyrosine 737 and tyrosine 928.

It belongs to the adaptor complexes large subunit family. Adapter protein complex 2 (AP-2) is a heterotetramer composed of two large adaptins (alpha-type subunit AP2A1 or AP2A2 and beta-type subunit AP2B1), a medium adaptin (mu-type subunit AP2M1) and a small adaptin (sigma-type subunit AP2S1). Interacts with EPN1. Interacts with EPS15; clathrin competes with EPS15. Interacts with SNAP91; clathrin competes with SNAP91. Interacts with CLTC; clathrin competes with EPS15, SNAP91 and PIP5K1C. Interacts with LDLRAP1. Interacts with AMPH and BIN1. Interacts with ARF6 (GDP-bound). Interacts (dephosphorylated at Tyr-737) with ARRB1; phosphorylation of AP2B1 at Tyr-737 disrupts the interaction. Interacts with SLC2A8. Interacts with SCYL1 and SCYL2. Interacts with TGFBR1 and TGFBR2. Interacts with PIP5K1C; clathrin competes with PIP5K1C. Interacts with DENND1B. Interacts with FCHO1. Interacts with RFTN1. Interacts with KIAA1107. Together with AP2A1 or AP2A2 and AP2M1, it interacts with ADAM10; this interaction facilitates ADAM10 endocytosis from the plasma membrane during long-term potentiation in hippocampal neurons. The N-terminus is blocked. In terms of processing, phosphorylation at Tyr-737 by SRC occurs at the plasma membrane in clathrin-coated vesicles (CCVs).

The protein resides in the cell membrane. It localises to the membrane. The protein localises to the coated pit. In terms of biological role, component of the adaptor protein complex 2 (AP-2). Adaptor protein complexes function in protein transport via transport vesicles in different membrane traffic pathways. Adaptor protein complexes are vesicle coat components and appear to be involved in cargo selection and vesicle formation. AP-2 is involved in clathrin-dependent endocytosis in which cargo proteins are incorporated into vesicles surrounded by clathrin (clathrin-coated vesicles, CCVs) which are destined for fusion with the early endosome. The clathrin lattice serves as a mechanical scaffold but is itself unable to bind directly to membrane components. Clathrin-associated adaptor protein (AP) complexes which can bind directly to both the clathrin lattice and to the lipid and protein components of membranes are considered to be the major clathrin adaptors contributing the CCV formation. AP-2 also serves as a cargo receptor to selectively sort the membrane proteins involved in receptor-mediated endocytosis. AP-2 seems to play a role in the recycling of synaptic vesicle membranes from the presynaptic surface. AP-2 recognizes Y-X-X-[FILMV] (Y-X-X-Phi) and [ED]-X-X-X-L-[LI] endocytosis signal motifs within the cytosolic tails of transmembrane cargo molecules. AP-2 may also play a role in maintaining normal post-endocytic trafficking through the ARF6-regulated, non-clathrin pathway. During long-term potentiation in hippocampal neurons, AP-2 is responsible for the endocytosis of ADAM10. The AP-2 beta subunit acts via its C-terminal appendage domain as a scaffolding platform for endocytic accessory proteins; at least some clathrin-associated sorting proteins (CLASPs) are recognized by their [DE]-X(1,2)-F-X-X-[FL]-X-X-X-R motif. The AP-2 beta subunit binds to clathrin heavy chain, promoting clathrin lattice assembly; clathrin displaces at least some CLASPs from AP2B1 which probably then can be positioned for further coat assembly. The sequence is that of AP-2 complex subunit beta (AP2B1) from Bos taurus (Bovine).